A 354-amino-acid polypeptide reads, in one-letter code: Uroporphyrinogen decarboxylase (354 aa).

Residues 27–31 (RQAGR), D77, Y154, S209, and H327 each bind substrate.

This sequence belongs to the uroporphyrinogen decarboxylase family. In terms of assembly, homodimer.

Its subcellular location is the cytoplasm. The catalysed reaction is uroporphyrinogen III + 4 H(+) = coproporphyrinogen III + 4 CO2. It functions in the pathway porphyrin-containing compound metabolism; protoporphyrin-IX biosynthesis; coproporphyrinogen-III from 5-aminolevulinate: step 4/4. Its function is as follows. Catalyzes the decarboxylation of four acetate groups of uroporphyrinogen-III to yield coproporphyrinogen-III. The sequence is that of Uroporphyrinogen decarboxylase from Methylobacillus flagellatus (strain ATCC 51484 / DSM 6875 / VKM B-1610 / KT).